The chain runs to 1003 residues: Retinoblastoma-related protein 1 (1003 aa).

The tract at residues 405–607 (TPVSTAMTTA…EKGSSMYNSL (203 aa)) is domain A. Positions 405 to 860 (TPVSTAMTTA…NEMFIPSVKP (456 aa)) are pocket. The segment at 608–729 (AVAKPSLAAE…PGGGGETCAE (122 aa)) is spacer. The interval 730-860 (TAINVFFGKI…NEMFIPSVKP (131 aa)) is domain B. Positions 868-899 (AGNNSEKNDHNDGQGPASPKPSPFPKLPDMSP) are disordered.

The protein belongs to the retinoblastoma protein (RB) family. As to expression, expressed in roots, stems, leaves and flowers.

The protein resides in the nucleus. Functionally, regulator of biological processes that recruits a histone deacetylase to control gene transcription. Formation of stable complexes with geminiviridae replication-associated proteins may create a cellular environment which favors viral DNA replication. May play a role in the entry into mitosis, negatively regulating the cell proliferation during leaf, stem, and flower development. Critical regulator of the endocycle. The protein is Retinoblastoma-related protein 1 (RBR1) of Nicotiana benthamiana.